Consider the following 282-residue polypeptide: WRKY transcription factor 71 (282 aa).

The disordered stretch occupies residues 63-121 (LTSNSPVVSSSSNEGEPKENTNDKSDQMEDNEGDLHGVGESSKQLTKQGKKKGEKKERE). The segment covering 65–75 (SNSPVVSSSSN) has biased composition (low complexity). The segment covering 77–99 (GEPKENTNDKSDQMEDNEGDLHG) has biased composition (basic and acidic residues). Residues 130 to 195 (SEIDHLEDGY…YEGKHNHPIP (66 aa)) constitute a DNA-binding region (WRKY).

The protein belongs to the WRKY group II-c family.

The protein localises to the nucleus. Functionally, transcription factor. Interacts specifically with the W box (5'-(T)TGAC[CT]-3'), a frequently occurring elicitor-responsive cis-acting element. In Arabidopsis thaliana (Mouse-ear cress), this protein is WRKY transcription factor 71 (WRKY71).